Here is an 88-residue protein sequence, read N- to C-terminus: Large ribosomal subunit protein bL31B (88 aa).

Belongs to the bacterial ribosomal protein bL31 family. Type B subfamily. In terms of assembly, part of the 50S ribosomal subunit.

This chain is Large ribosomal subunit protein bL31B, found in Nocardia farcinica (strain IFM 10152).